Reading from the N-terminus, the 108-residue chain is Iron-sulfur cluster assembly protein CyaY (108 aa).

This sequence belongs to the frataxin family.

Involved in iron-sulfur (Fe-S) cluster assembly. May act as a regulator of Fe-S biogenesis. The chain is Iron-sulfur cluster assembly protein CyaY from Pseudoalteromonas atlantica (strain T6c / ATCC BAA-1087).